The primary structure comprises 466 residues: Cell division protein FtsP (466 aa).

Positions 1–28 (MNYSRRSLFKKTLIATALSALPATLLAA) form a signal peptide, tat-type signal.

Belongs to the FtsP family. Predicted to be exported by the Tat system. The position of the signal peptide cleavage has not been experimentally proven.

It is found in the periplasm. In terms of biological role, cell division protein that is required for growth during stress conditions. May be involved in protecting or stabilizing the divisomal assembly under conditions of stress. This chain is Cell division protein FtsP, found in Actinobacillus succinogenes (strain ATCC 55618 / DSM 22257 / CCUG 43843 / 130Z).